A 149-amino-acid chain; its full sequence is Probable calcium-binding protein CML25/26 (149 aa).

EF-hand domains are found at residues 1–35, 37–72, 77–113, and 117–149; these read MASSASSVFAAFDKDGDGKVSASELRGCMAAALGE, VSEEEAAAILATADTDGDGLLDHHEFMRLSAAHQLQ, ESLRCLREAFDMYAEEEETAVITPASLRRMLRRLGSE, and LEMEECRAMICRFDLNGDGVLSFDEFRVMMLMA. Ca(2+)-binding residues include Asp13, Asp15, Asp17, Lys19, Glu24, Asp50, Asp52, Asp54, and Glu61. Ca(2+)-binding residues include Asp130, Asn132, Asp134, and Glu141.

Functionally, potential calcium sensor. The sequence is that of Probable calcium-binding protein CML25/26 (CML25) from Oryza sativa subsp. japonica (Rice).